A 237-amino-acid chain; its full sequence is Ribonuclease PH (237 aa).

Phosphate contacts are provided by residues arginine 86 and 124–126; that span reads GTR.

This sequence belongs to the RNase PH family. Homohexameric ring arranged as a trimer of dimers.

It carries out the reaction tRNA(n+1) + phosphate = tRNA(n) + a ribonucleoside 5'-diphosphate. Its function is as follows. Phosphorolytic 3'-5' exoribonuclease that plays an important role in tRNA 3'-end maturation. Removes nucleotide residues following the 3'-CCA terminus of tRNAs; can also add nucleotides to the ends of RNA molecules by using nucleoside diphosphates as substrates, but this may not be physiologically important. Probably plays a role in initiation of 16S rRNA degradation (leading to ribosome degradation) during starvation. This chain is Ribonuclease PH, found in Methylobacterium sp. (strain 4-46).